A 363-amino-acid polypeptide reads, in one-letter code: Protein RecA (363 aa).

Residue 79 to 86 (GPESSGKT) participates in ATP binding.

It belongs to the RecA family.

It localises to the cytoplasm. Its function is as follows. Can catalyze the hydrolysis of ATP in the presence of single-stranded DNA, the ATP-dependent uptake of single-stranded DNA by duplex DNA, and the ATP-dependent hybridization of homologous single-stranded DNAs. It interacts with LexA causing its activation and leading to its autocatalytic cleavage. This chain is Protein RecA, found in Borrelia duttonii (strain Ly).